The chain runs to 647 residues: ATP-dependent zinc metalloprotease FtsH (647 aa).

The disordered stretch occupies residues 1–33; the sequence is MARKSDEDTNPMDKFMDRLRGSPGDGGPGRPDP. At 1–39 the chain is on the cytoplasmic side; that stretch reads MARKSDEDTNPMDKFMDRLRGSPGDGGPGRPDPSQRKVH. A helical membrane pass occupies residues 40 to 60; sequence FSIWYFILALLLIVWMQTYMG. At 61-134 the chain is on the periplasmic side; the sequence is EQQSEKISYS…RFSGDVQNPW (74 aa). The chain crosses the membrane as a helical span at residues 135–155; sequence LGLITWWLLPFAIMIFFWSFL. At 156-647 the chain is on the cytoplasmic side; it reads MRRMGGGPQG…DPVQVEGGAA (492 aa). An ATP-binding site is contributed by 227–234; it reads GAPGTGKT. His449 contributes to the Zn(2+) binding site. Residue Glu450 is part of the active site. Positions 453 and 526 each coordinate Zn(2+).

In the central section; belongs to the AAA ATPase family. It in the C-terminal section; belongs to the peptidase M41 family. Homohexamer. Requires Zn(2+) as cofactor.

It is found in the cell inner membrane. Functionally, acts as a processive, ATP-dependent zinc metallopeptidase for both cytoplasmic and membrane proteins. Plays a role in the quality control of integral membrane proteins. This Syntrophobacter fumaroxidans (strain DSM 10017 / MPOB) protein is ATP-dependent zinc metalloprotease FtsH.